The following is a 306-amino-acid chain: Pentalenolactone F synthase (306 aa).

Fe cation-binding residues include histidine 110 and aspartate 112. Positions 138 and 258 each coordinate 2-oxoglutarate. A Fe cation-binding site is contributed by histidine 273. Arginine 284 lines the 2-oxoglutarate pocket.

It belongs to the TfdA dioxygenase family. The cofactor is Fe(2+).

It carries out the reaction pentalenolactone D + 2 2-oxoglutarate + 2 O2 = pentalenolactone F + 2 succinate + 2 CO2 + H2O. The protein operates within antibiotic biosynthesis; neopentalenolactone biosynthesis. With respect to regulation, activated by ascorbate. In terms of biological role, catalyzes the Fe(2+) and alpha-ketoglutarate-dependent oxidation of pentalenolactone D to pentalenolactone F. Also able to catalyze the oxidation of pentalenolactone D to pentalenolactone E. In presence of neopentalenolactone D, mediates production of PL308 and possibly neopentalenolactone E. This chain is Pentalenolactone F synthase (ptlD), found in Streptomyces avermitilis (strain ATCC 31267 / DSM 46492 / JCM 5070 / NBRC 14893 / NCIMB 12804 / NRRL 8165 / MA-4680).